A 473-amino-acid polypeptide reads, in one-letter code: MKTLYSLRRYYPVETLFNGTLALGGRDQETTGFAWWAGNARLINLSGKLLGAHVAHAGLIVFWAGAMNLFEVAHFVPEKPMYEQGLILLPHLATLGWGVGPGGEVIDTFPYFVSGVLHLISSAVLGFGGIYHSLIGPETLEESFPFFGYVWKDKNKMTTILGIHLVLLGLGAFLLVFKASFFGGVYDTWAPGGGDVREITNLTLSPSIIFGYLLKSPFGGEGWIVSVDNLEDIIGGHVWLGLICILGGIWHILTKPFAWARRALVWSGEAYLSYSLGAISVFGFIACCFVWFNNTAYPSEFYGPTGPEASQAQAFTFLVRDQRLGANVGSAQGPTGLGKYLMRSPTGEIIFGGETMRFWDLRAPWLEPLRGPNGLDLSKLKQDIQPWQERRSAEYMTHAPLGSLNSVGGVATEINAVNYVSPRSWLATSHFVLGFFFFVGHLWHAGRARAAAAGFEKGIDRDSEPVLSMTPLN.

The propeptide occupies M1 to E14. Position 15 is an N-acetylthreonine (T15). Phosphothreonine is present on T15. The next 5 helical transmembrane spans lie at L69 to A93, L134 to N155, K178 to T200, K255 to S275, and W291 to A312. E367 serves as a coordination point for [CaMn4O5] cluster. A helical transmembrane segment spans residues R447–P471.

It belongs to the PsbB/PsbC family. PsbC subfamily. In terms of assembly, PSII is composed of 1 copy each of membrane proteins PsbA, PsbB, PsbC, PsbD, PsbE, PsbF, PsbH, PsbI, PsbJ, PsbK, PsbL, PsbM, PsbT, PsbX, PsbY, PsbZ, Psb30/Ycf12, at least 3 peripheral proteins of the oxygen-evolving complex and a large number of cofactors. It forms dimeric complexes. The cofactor is Binds multiple chlorophylls and provides some of the ligands for the Ca-4Mn-5O cluster of the oxygen-evolving complex. It may also provide a ligand for a Cl- that is required for oxygen evolution. PSII binds additional chlorophylls, carotenoids and specific lipids..

The protein localises to the plastid. It is found in the chloroplast thylakoid membrane. In terms of biological role, one of the components of the core complex of photosystem II (PSII). It binds chlorophyll and helps catalyze the primary light-induced photochemical processes of PSII. PSII is a light-driven water:plastoquinone oxidoreductase, using light energy to abstract electrons from H(2)O, generating O(2) and a proton gradient subsequently used for ATP formation. The sequence is that of Photosystem II CP43 reaction center protein from Anthoceros angustus (Hornwort).